The chain runs to 1845 residues: Histone-lysine N-methyltransferase, H3 lysine-79 specific (1845 aa).

Residues 1–44 are compositionally biased toward polar residues; that stretch reads MSTNSTPRKQKLSNSKSLQNSPISPTVKKTNSFPLGNNIPTNIN. Disordered regions lie at residues 1-67, 83-306, 450-470, 486-571, 585-681, 741-767, 862-881, and 963-1102; these read MSTN…NGIG, PPLP…NKWT, SHDI…NKNK, QKLK…TERK, RKER…NDSY, GETF…KKIE, QTTK…AETE, and KDNP…SNSL. 4 stretches are compositionally biased toward low complexity: residues 52-67, 90-162, 191-226, and 239-263; these read NNSN…NGIG, SSSS…QQEP, PSTP…SNNS, and NNNN…NNNN. A compositionally biased stretch (acidic residues) spans 268–280; sequence VIDDDDDDDDDEG. Polar residues predominate over residues 282–294; it reads SIKSTHTSTQSTP. A compositionally biased stretch (basic and acidic residues) spans 295-304; sequence IRDRRQRDNK. Residues 453 to 464 show a composition bias toward low complexity; sequence INNNNNNNNNNK. Positions 585-679 are enriched in basic and acidic residues; sequence RKERERKERK…IEKERREKND (95 aa). A required for interaction with nucleosomes and DNA region spans residues 625–639; it reads KKKEKEKEKEKEKEK. Composition is skewed to low complexity over residues 750 to 763, 862 to 877, 972 to 1011, and 1020 to 1067; these read NNNN…NNNN, QTTK…TTTT, NNNR…RNNN, and NNNN…NNTI. A compositionally biased stretch (basic and acidic residues) spans 1069 to 1080; sequence KKIETIKKDINK. The span at 1084–1102 shows a compositional bias: low complexity; sequence KTTTTTSSSSSSTSSSNSL. One can recognise a DOT1 domain in the interval 1125–1446; sequence FDVGIGVPVT…KDSDIVTDQT (322 aa). S-adenosyl-L-methionine is bound by residues 1251-1254, 1274-1283, and Glu-1300; these read YGEA and FCDIGCGIGN. 5 disordered regions span residues 1463–1559, 1610–1661, 1735–1762, 1772–1791, and 1799–1845; these read LQLF…NKPI, RISP…SSND, HQKS…KKEQ, NYNN…NHNN, and TDLI…DNNK. Composition is skewed to low complexity over residues 1467–1522, 1541–1556, and 1610–1642; these read SSSS…TPNS, NNNN…NSNN, and RISP…SSSD. The span at 1643–1656 shows a compositional bias: acidic residues; the sequence is NENDDDNGDDEDDS. Basic residues predominate over residues 1745 to 1759; the sequence is RLSRKQKKLAKKNKK. 2 stretches are compositionally biased toward low complexity: residues 1799–1817 and 1835–1845; these read TDLI…INND and KDYNNINDNNK.

Belongs to the class I-like SAM-binding methyltransferase superfamily. DOT1 family.

The protein resides in the nucleus. The enzyme catalyses L-lysyl(79)-[histone H3] + 3 S-adenosyl-L-methionine = N(6),N(6),N(6)-trimethyl-L-lysyl(79)-[histone H3] + 3 S-adenosyl-L-homocysteine + 3 H(+). Histone methyltransferase that specifically methylates histone H3 to form H3K79me. This methylation is required for telomere silencing, correct growth and development, and for resistance to DNA damage induced by UV LIGHT. This Dictyostelium discoideum (Social amoeba) protein is Histone-lysine N-methyltransferase, H3 lysine-79 specific.